The primary structure comprises 155 residues: Regulatory protein RecX (155 aa).

Belongs to the RecX family.

It localises to the cytoplasm. Modulates RecA activity. The protein is Regulatory protein RecX of Pseudomonas savastanoi pv. phaseolicola (strain 1448A / Race 6) (Pseudomonas syringae pv. phaseolicola (strain 1448A / Race 6)).